We begin with the raw amino-acid sequence, 295 residues long: uncharacterized protein (295 aa).

The signal sequence occupies residues methionine 1–alanine 19. The segment at arginine 275–lysine 295 is disordered. Low complexity predominate over residues asparagine 276–lysine 295.

This is an uncharacterized protein from Rickettsia conorii (strain ATCC VR-613 / Malish 7).